The chain runs to 139 residues: Cystatin-1 (139 aa).

The signal sequence occupies residues 1–22 (MHSRLPVPASLCLLLLLPSVLP). The 101-residue stretch at 27–127 (GGLSPRDVTD…CHFEVWSRPW (101 aa)) folds into the Cystatin domain. Positions 71-75 (QVVSG) match the Secondary area of contact motif. 2 disulfides stabilise this stretch: cysteine 89/cysteine 105 and cysteine 118/cysteine 138.

This sequence belongs to the cystatin family. In terms of tissue distribution, expressed by the venom gland.

It localises to the secreted. Its function is as follows. Inhibits various C1 cysteine proteases including cathepsin L, papain and cathepsin B. This protein has no toxic activity and its function in the venom is unknown. It may play a role as housekeeping or regulatory protein. This chain is Cystatin-1, found in Crotalus adamanteus (Eastern diamondback rattlesnake).